A 267-amino-acid chain; its full sequence is Acryloyl-CoA reductase electron transfer subunit gamma (267 aa).

As to quaternary structure, heterohexadecamer; tetramer of tetramers. Each tetramer is composed of 2 alpha (AcrC), a beta (AcrA) and a gamma (AcrB) subunit.

Its subcellular location is the cytoplasm. In terms of biological role, part of the ETF-acryloyl-CoA reductase complex involved in the pathway of L-alanine fermentation. The electron transfer flavoprotein (ETF) serves as a specific electron acceptor for acryloyl-CoA reductase. The chain is Acryloyl-CoA reductase electron transfer subunit gamma (acrB) from Anaerotignum propionicum (Clostridium propionicum).